Reading from the N-terminus, the 210-residue chain is Urease accessory protein UreE (210 aa).

Residues 136-210 form a disordered region; that stretch reads PEGGAYAEPS…HGHSHAHDHK (75 aa). 2 stretches are compositionally biased toward basic and acidic residues: residues 145–169 and 178–196; these read SHAHGDHDHDHHGHDHHGHDHTSHD and HDHDHGHAHDDHVHDEHCG. A compositionally biased stretch (basic residues) spans 197–210; the sequence is HDHHHGHSHAHDHK.

Belongs to the UreE family.

It is found in the cytoplasm. Functionally, involved in urease metallocenter assembly. Binds nickel. Probably functions as a nickel donor during metallocenter assembly. The polypeptide is Urease accessory protein UreE (Bradyrhizobium sp. (strain ORS 278)).